Consider the following 202-residue polypeptide: PITH domain-containing protein 1 (202 aa).

The PITH domain occupies 11 to 184; it reads SHGVDDGIEY…IVNTVYESKP (174 aa).

The protein belongs to the PITHD1 family.

The polypeptide is PITH domain-containing protein 1 (Dictyostelium discoideum (Social amoeba)).